Consider the following 138-residue polypeptide: Acidic phospholipase A2 AplTX-I (138 aa).

Residues 1 to 16 form the signal peptide; that stretch reads MRTLWIMAVLLLGVEG. 7 disulfide bridges follow: Cys42-Cys131, Cys44-Cys60, Cys59-Cys111, Cys65-Cys138, Cys66-Cys104, Cys73-Cys97, and Cys91-Cys102. 3 residues coordinate Ca(2+): Tyr43, Gly45, and Gly47. Residue His63 is part of the active site. Asp64 serves as a coordination point for Ca(2+). Residue Asp105 is part of the active site.

In terms of assembly, monomer. Ca(2+) is required as a cofactor. As to expression, expressed by the venom gland.

It localises to the secreted. The enzyme catalyses a 1,2-diacyl-sn-glycero-3-phosphocholine + H2O = a 1-acyl-sn-glycero-3-phosphocholine + a fatty acid + H(+). With respect to regulation, inhibited by divalent cations different from calcium ions (cadmium, magnesium, manganese, zinc), since they act as competitive antagonists of this cofactor. Functionally, snake venom phospholipase A2 (PLA2) that triggers a high neuromuscular toxicity in chick biventer cervicis preparations, but not in mouse phrenic nerve-diaphragm (PND) preparations, suggesting a selective neurotoxin activity towards birds. Does not induce myotoxic, coagulant, anticoagulant, edema, and antibacterial activities. PLA2 catalyzes the calcium-dependent hydrolysis of the 2-acyl groups in 3-sn-phosphoglycerides. This Agkistrodon piscivorus leucostoma (Western cottonmouth) protein is Acidic phospholipase A2 AplTX-I.